Consider the following 512-residue polypeptide: Sucrose-6-phosphate hydrolase (512 aa).

Residues 40–43 (WMND), glutamine 59, tryptophan 67, 102–103 (FS), 165–166 (RD), glutamate 229, and tryptophan 311 each bind substrate. Residue aspartate 43 is part of the active site.

The protein belongs to the glycosyl hydrolase 32 family.

Its subcellular location is the cytoplasm. It carries out the reaction Hydrolysis of terminal non-reducing beta-D-fructofuranoside residues in beta-D-fructofuranosides.. Its pathway is glycan biosynthesis; sucrose metabolism. This is Sucrose-6-phosphate hydrolase (sacA) from Zymomonas mobilis subsp. mobilis (strain ATCC 10988 / DSM 424 / LMG 404 / NCIMB 8938 / NRRL B-806 / ZM1).